A 253-amino-acid chain; its full sequence is Precorrin-4 C(11)-methyltransferase (253 aa).

Belongs to the precorrin methyltransferase family.

The enzyme catalyses precorrin-4 + S-adenosyl-L-methionine = precorrin-5 + S-adenosyl-L-homocysteine. The protein operates within cofactor biosynthesis; adenosylcobalamin biosynthesis; cob(II)yrinate a,c-diamide from precorrin-2 (aerobic route): step 4/10. In terms of biological role, catalyzes the methylation of C-11 in precorrin-4 to form precorrin-5. In Sinorhizobium sp, this protein is Precorrin-4 C(11)-methyltransferase (cobM).